The chain runs to 605 residues: MALPACAVREFEPPRQPERGAPVRTTCPRRHSRVEAELAASRPGSVAASVRAGPPRGVSHGFHTRPLLDKPRKASSSLAGAACAPLFALLSRGRRRRMHVLRRRWDLGSLCRALLTRGLAALGHSLKHVLGAIFSKIFGPMASVGNMDEKSNKLLLALVMLFLFAVIVLQYVCPGTECQLLRLQAFSSPVPDPYRSEDESSARFVPRYNFTRGDLLRKVDFDIKGDDLIVFLHIQKTGGTTFGRHLVRNIQLEQPCECRVGQKKCTCHRPGKRETWLFSRFSTGWSCGLHADWTELTSCVPSVVDGKRDARLRPSRNFHYITILRDPVSRYLSEWRHVQRGATWKASLHVCDGRPPTSEELPSCYTGDDWSGCPLKEFMDCPYNLANNRQVRMLSDLTLVGCYNLSVMPEKQRNKVLLESAKSNLKHMAFFGLTEFQRKTQYLFEKTFNMNFISPFTQYNTTRASSVEINEEIQKRIEGLNFLDMELYSYAKDLFLQRYQFMRQKEHQEARRKRQEQRKFLKGRLLQTHFQSQGQGQSQNPNQNQSQNPNPNANQNLTQNLMQNLTQSLSQKENRESPKQNSGKEQNDNTSNGTNDYIGSVEKWR.

At methionine 1–proline 4 the chain is on the cytoplasmic side. The interval methionine 1 to proline 66 is disordered. Residues alanine 5–cysteine 27 traverse the membrane as a helical; Signal-anchor for type II membrane protein segment. The segment covering arginine 9–glutamate 18 has biased composition (basic and acidic residues). The Lumenal portion of the chain corresponds to proline 28 to arginine 605. N-linked (GlcNAc...) asparagine glycosylation occurs at asparagine 209. 3'-phosphoadenylyl sulfate is bound at residue histidine 233–threonine 241. Substrate is bound by residues lysine 263 to lysine 264, arginine 280, tryptophan 285, and histidine 290. Histidine 290 (proton acceptor) is an active-site residue. 3'-phosphoadenylyl sulfate contacts are provided by arginine 325 and serine 333. The substrate site is built by histidine 337 and tryptophan 344. Residue asparagine 404 is glycosylated (N-linked (GlcNAc...) asparagine). Threonine 457–tyrosine 459 contributes to the 3'-phosphoadenylyl sulfate binding site. Asparagine 460 is a glycosylation site (N-linked (GlcNAc...) asparagine). Arginine 463–alanine 464 serves as a coordination point for 3'-phosphoadenylyl sulfate. The tract at residues phenylalanine 530–arginine 605 is disordered. The span at glutamine 531–glutamine 571 shows a compositional bias: low complexity. 5 N-linked (GlcNAc...) asparagine glycosylation sites follow: asparagine 544, asparagine 556, asparagine 564, asparagine 589, and asparagine 592. A compositionally biased stretch (polar residues) spans lysine 579 to tyrosine 597.

Belongs to the sulfotransferase 6 family.

The protein resides in the membrane. It carries out the reaction alpha-D-glucosaminyl-[heparan sulfate](n) + 3'-phosphoadenylyl sulfate = 6-sulfo-alpha-D-glucosaminyl-[heparan sulfate](n) + adenosine 3',5'-bisphosphate + H(+). 6-O-sulfation enzyme which catalyzes the transfer of sulfate from 3'-phosphoadenosine 5'-phosphosulfate (PAPS) to position 6 of the N-sulfoglucosamine residue (GlcNS) of heparan sulfate. The sequence is that of Heparan-sulfate 6-O-sulfotransferase 2 from Homo sapiens (Human).